Reading from the N-terminus, the 50-residue chain is Large ribosomal subunit protein bL33 (50 aa).

The protein belongs to the bacterial ribosomal protein bL33 family.

The sequence is that of Large ribosomal subunit protein bL33 (rpmG) from Aquifex aeolicus (strain VF5).